The primary structure comprises 200 residues: Large ribosomal subunit protein uL4 (200 aa).

The tract at residues Gly-38–Ile-72 is disordered.

This sequence belongs to the universal ribosomal protein uL4 family. In terms of assembly, part of the 50S ribosomal subunit.

Functionally, one of the primary rRNA binding proteins, this protein initially binds near the 5'-end of the 23S rRNA. It is important during the early stages of 50S assembly. It makes multiple contacts with different domains of the 23S rRNA in the assembled 50S subunit and ribosome. Its function is as follows. Forms part of the polypeptide exit tunnel. The protein is Large ribosomal subunit protein uL4 of Pseudomonas fluorescens (strain ATCC BAA-477 / NRRL B-23932 / Pf-5).